A 414-amino-acid polypeptide reads, in one-letter code: Serine/threonine transporter SstT (414 aa).

Helical transmembrane passes span 22-42 (GLVL…TIGF), 54-74 (IFVK…VMAA), 89-109 (IIVL…IAGF), 148-168 (AIFK…GLAL), 189-209 (IVHV…AETL), 223-243 (LLAV…PILV), 305-325 (MAGA…TLGL), and 337-357 (IVAA…LLLI).

It belongs to the dicarboxylate/amino acid:cation symporter (DAACS) (TC 2.A.23) family.

The protein resides in the cell inner membrane. It carries out the reaction L-serine(in) + Na(+)(in) = L-serine(out) + Na(+)(out). The catalysed reaction is L-threonine(in) + Na(+)(in) = L-threonine(out) + Na(+)(out). Involved in the import of serine and threonine into the cell, with the concomitant import of sodium (symport system). The polypeptide is Serine/threonine transporter SstT (Haemophilus influenzae (strain PittEE)).